Consider the following 213-residue polypeptide: MAKNYYDITLALSGICQSARLVQQLAHQGHCDADALHVSLNSVIDMNPSSTLGVFGGSEANLRLGLETLLGVLNASSRQGLNAELTRYTLSLMVLERKLSSAKGALNTLGDRINGLQRQLDHFDLQSDTLMSAMAGIYVDVISPLGPRIQVTGSPAVLQSPQVQAKVRASLLAGIRAAVLWHQVGGGRLQLMFSRHRLTTQAKQILAYLTPEL.

Residues 79 to 122 (QGLNAELTRYTLSLMVLERKLSSAKGALNTLGDRINGLQRQLDH) are a coiled coil.

The protein belongs to the HflD family.

Its subcellular location is the cytoplasm. It localises to the cell inner membrane. This Salmonella typhi protein is High frequency lysogenization protein HflD homolog.